The chain runs to 458 residues: Smoothelin-like protein 2 (458 aa).

Residues 24-88 adopt a coiled-coil conformation; that stretch reads LEGAVRALHE…RQVESLGLTT (65 aa). Disordered regions lie at residues 87 to 111, 123 to 142, and 151 to 312; these read TTGL…RAPR, FSLS…SELE, and IIEN…GAQA. A compositionally biased stretch (pro residues) spans 94 to 104; sequence PGTPSPPPAPG. Threonine 96 carries the phosphothreonine modification. Serine 98, serine 126, and serine 131 each carry phosphoserine. Basic and acidic residues predominate over residues 131–142; the sequence is SLDHHDEASELE. Low complexity-rich tracts occupy residues 158 to 167 and 209 to 220; these read PGADPGDGPP and TSATALSPTSAA. Residues 225-244 are compositionally biased toward polar residues; sequence LSSSPSEATTPWTPSPSEKN. Residues 245-254 show a composition bias toward low complexity; that stretch reads SSLPRSLSSS. Phosphoserine is present on residues serine 252, serine 254, and serine 267. Residues 270-283 show a composition bias toward pro residues; that stretch reads LVTPPQSPPSPQPP. Phosphothreonine is present on threonine 272. Phosphoserine is present on serine 276. The segment covering 290–299 has biased composition (basic and acidic residues); it reads RPGERRRELV. Positions 300–310 are enriched in polar residues; that stretch reads RSQTLPRTSGA. Serine 341 carries the post-translational modification Phosphoserine. Residues 348-455 form the Calponin-homology (CH) domain; the sequence is SSIKQILLEW…YVQSLYNHLR (108 aa).

This sequence belongs to the smoothelin family.

This is Smoothelin-like protein 2 (SMTNL2) from Bos taurus (Bovine).